The chain runs to 740 residues: Leucine-rich repeat neuronal protein 4 (740 aa).

Positions 1–18 (MRQTLPLLLLTVLRPSWA) are cleaved as a signal peptide. The Extracellular portion of the chain corresponds to 19 to 679 (DPPQEKVPLF…PCAAFTTKPS (661 aa)). N-linked (GlcNAc...) asparagine glycosylation is present at Asn-42. LRR repeat units lie at residues 51-74 (LPAA…GCLP), 75-97 (RTLR…ELGH), 98-123 (LEQL…GPAG), 125-144 (HTLD…TGPA), 145-168 (LSSL…AFAC), 174-197 (LLNL…AFAG), 203-226 (LVTL…WIRD), 228-251 (PKLT…IFKM), 253-276 (PNLQ…IFQD), and 277-300 (TPHL…TLDS). An N-linked (GlcNAc...) asparagine glycan is attached at Asn-176. N-linked (GlcNAc...) asparagine glycosylation is found at Asn-289, Asn-379, and Asn-442. Residues 389-517 (VAPSAAPATR…QAPNPSLSEG (129 aa)) form a disordered region. 2 stretches are compositionally biased toward polar residues: residues 430-454 (APST…STTR) and 490-514 (WDRS…NPSL). The Fibronectin type-III domain maps to 579-679 (IPDPPRLQGV…PCAAFTTKPS (101 aa)). N-linked (GlcNAc...) asparagine glycosylation is present at Asn-622. Residues 680–700 (FALLLSGLCAASGLLLASTVV) traverse the membrane as a helical segment. The Cytoplasmic portion of the chain corresponds to 701 to 740 (LSACLCRRGQTLGLQRCDTHLVAYKNPAFDDYPLGLQTVS).

It is found in the membrane. May play an important role in hippocampus-dependent long-lasting memory. In Homo sapiens (Human), this protein is Leucine-rich repeat neuronal protein 4 (LRRN4).